The primary structure comprises 456 residues: Glycosyl hydrolase family 109 protein 2 (456 aa).

A signal peptide (tat-type signal) is located at residues 1–33 (MSGFDRRSFLKASMVTAAATALAACASSERATG). NAD(+)-binding positions include 63-64 (ER), Asp-85, 134-137 (WAWH), 154-155 (EV), and Asn-183. Substrate contacts are provided by residues Tyr-212, Arg-231, 243 to 246 (YPTH), and Tyr-325. Residue Tyr-243 coordinates NAD(+).

The protein belongs to the Gfo/Idh/MocA family. Glycosyl hydrolase 109 subfamily. NAD(+) is required as a cofactor. Predicted to be exported by the Tat system. The position of the signal peptide cleavage has not been experimentally proven.

Functionally, glycosidase. This Shewanella sp. (strain MR-4) protein is Glycosyl hydrolase family 109 protein 2.